Reading from the N-terminus, the 403-residue chain is Flavohemoprotein (403 aa).

The Globin domain maps to 1–138 (MLTPEQKAIV…LADLMIGIEK (138 aa)). Heme b is bound at residue His85. Catalysis depends on charge relay system residues Tyr95 and Glu137. Residues 149 to 403 (GGWRDFRPFR…SQSFAPVILG (255 aa)) form a reductase region. The region spanning 152 to 257 (RDFRPFRVAR…HVPAGDFVLQ (106 aa)) is the FAD-binding FR-type domain. FAD is bound by residues Tyr190 and 206-209 (RQYS). An NADP(+)-binding site is contributed by 269 to 274 (GVGITP). 390–393 (TFGP) serves as a coordination point for FAD.

Belongs to the globin family. Two-domain flavohemoproteins subfamily. It in the C-terminal section; belongs to the flavoprotein pyridine nucleotide cytochrome reductase family. Heme b is required as a cofactor. FAD serves as cofactor.

The enzyme catalyses 2 nitric oxide + NADPH + 2 O2 = 2 nitrate + NADP(+) + H(+). The catalysed reaction is 2 nitric oxide + NADH + 2 O2 = 2 nitrate + NAD(+) + H(+). The sequence is that of Flavohemoprotein from Deinococcus radiodurans (strain ATCC 13939 / DSM 20539 / JCM 16871 / CCUG 27074 / LMG 4051 / NBRC 15346 / NCIMB 9279 / VKM B-1422 / R1).